The sequence spans 125 residues: uncharacterized protein (125 aa).

The signal sequence occupies residues 1-21; that stretch reads MIRNIIITISAILLLTSKGFA. Residues 54 to 102 are a coiled coil; sequence KPEIREEIQKYRVEIVNINKKKRELYDKLSKEAQNFLAKEQEYKQRLSS. The disordered stretch occupies residues 96-125; sequence YKQRLSSSSMATEDSKDNNTAKDNKDADKK. The span at 108-125 shows a compositional bias: basic and acidic residues; it reads EDSKDNNTAKDNKDADKK.

This is an uncharacterized protein from Rickettsia bellii (strain RML369-C).